Reading from the N-terminus, the 372-residue chain is Mitogen-activated protein kinase spk1 (372 aa).

A compositionally biased stretch (polar residues) spans M1–S25. The interval M1–H29 is disordered. Residues Y39–V327 form the Protein kinase domain. ATP contacts are provided by residues I45 to V53 and K68. D163 acts as the Proton acceptor in catalysis. The residue at position 199 (T199) is a Phosphothreonine. Residues T199–Y201 carry the TXY motif. A Phosphotyrosine modification is found at Y201.

This sequence belongs to the protein kinase superfamily. CMGC Ser/Thr protein kinase family. MAP kinase subfamily. It depends on Mg(2+) as a cofactor. Post-translationally, dually phosphorylated on Thr-199 and Tyr-201, which activates the enzyme.

The protein localises to the nucleus. It carries out the reaction L-seryl-[protein] + ATP = O-phospho-L-seryl-[protein] + ADP + H(+). It catalyses the reaction L-threonyl-[protein] + ATP = O-phospho-L-threonyl-[protein] + ADP + H(+). Activated by tyrosine and threonine phosphorylation. Its function is as follows. Involved in mating signal transduction pathway. The sequence is that of Mitogen-activated protein kinase spk1 (spk1) from Schizosaccharomyces pombe (strain 972 / ATCC 24843) (Fission yeast).